Consider the following 197-residue polypeptide: Adenylyl-sulfate kinase (197 aa).

33–40 contributes to the ATP binding site; it reads GLSGSGKS. The active-site Phosphoserine intermediate is Ser-107.

This sequence belongs to the APS kinase family.

It carries out the reaction adenosine 5'-phosphosulfate + ATP = 3'-phosphoadenylyl sulfate + ADP + H(+). Its pathway is sulfur metabolism; hydrogen sulfide biosynthesis; sulfite from sulfate: step 2/3. Catalyzes the synthesis of activated sulfate. The chain is Adenylyl-sulfate kinase from Bacillus velezensis (strain DSM 23117 / BGSC 10A6 / LMG 26770 / FZB42) (Bacillus amyloliquefaciens subsp. plantarum).